The sequence spans 945 residues: Netrin receptor UNC5B (945 aa).

Positions Met-1–Ala-26 are cleaved as a signal peptide. Over Gly-27–Tyr-377 the chain is Extracellular. Residues Pro-48–Tyr-145 form the Ig-like domain. 9 disulfides stabilise this stretch: Cys-69–Cys-130, Cys-81–Cys-128, Cys-174–Cys-225, Cys-258–Cys-295, Cys-262–Cys-299, Cys-273–Cys-285, Cys-314–Cys-348, Cys-318–Cys-353, and Cys-326–Cys-338. In terms of domain architecture, Ig-like C2-type spans Arg-147–Ile-242. N-linked (GlcNAc...) asparagine glycosylation occurs at Asn-222. 2 TSP type-1 domains span residues Asn-246 to Pro-300 and Asp-302 to Met-354. Asn-347 carries N-linked (GlcNAc...) asparagine glycosylation. The chain crosses the membrane as a helical span at residues Ala-378–Val-398. The Cytoplasmic segment spans residues Tyr-399–Cys-945. Cys-403 carries the S-palmitoyl cysteine lipid modification. The ZU5 domain occupies Ser-543–Ser-686. Tyr-581 carries the post-translational modification Phosphotyrosine. A UPA domain region spans residues Arg-689–Thr-838. Positions Ser-707–Lys-725 are interaction with DCC. The Death domain occupies Lys-865 to Gly-943.

Belongs to the unc-5 family. Interacts with the cytoplasmic part of DCC. Interacts with GNAI2 via its cytoplasmic part. Interacts (via death domain) with DAPK1 (via death domain). Interacts (via extracellular domain) with FLRT3 (via extracellular domain); the interaction is direct. Interacts (via extracellular domain) with FLRT2 and FLRT3 (via extracellular domain), but has higher affinity for FLRT3. Identified in a complex with FLRT3 and ADGRL3; does not interact with ADGRL3 by itself. Phosphorylated on cytoplasmic tyrosine residues. In terms of processing, proteolytically cleaved by caspases during apoptosis. The cleavage does not take place when the receptor is associated with netrin ligand. Its cleavage by caspases is required to induce apoptosis. Post-translationally, palmitoylation is required for pro-apoptotic activity, but not for location at lipid rafts. Highly expressed in brain. Also expressed at lower level in developing lung, cartilage, kidney and hematopoietic and immune tissues.

The protein localises to the cell membrane. It localises to the membrane raft. Its function is as follows. Receptor for netrin required for axon guidance. Mediates axon repulsion of neuronal growth cones in the developing nervous system upon ligand binding. Axon repulsion in growth cones may be caused by its association with DCC that may trigger signaling for repulsion. Functions as a netrin receptor that negatively regulates vascular branching during angiogenesis. Mediates retraction of tip cell filopodia on endothelial growth cones in response to netrin. It also acts as a dependence receptor required for apoptosis induction when not associated with netrin ligand. Mediates apoptosis by activating DAPK1. In the absence of NTN1, activates DAPK1 by reducing its autoinhibitory phosphorylation at Ser-308 thereby increasing its catalytic activity. In Homo sapiens (Human), this protein is Netrin receptor UNC5B (UNC5B).